A 334-amino-acid chain; its full sequence is Leucine-rich repeat-containing protein 26 (334 aa).

Positions 1 to 30 (MRGSFFSRLPPQLSLLLLLLLLLSWRRVWT) are cleaved as a signal peptide. Over 31–265 (QEHIGTDPSK…QCTQSLAARD (235 aa)) the chain is Extracellular. Residues 38–75 (PSKSPVAPVCPEACSCSPGGKANCSALALPAVPAGLSW) enclose the LRRNT domain. Cystine bridges form between Cys-47/Cys-53 and Cys-51/Cys-61. LRR repeat units lie at residues 76–97 (QVRS…AFAD), 100–121 (ALLY…AFWG), 124–145 (VLQR…TFTP), 148–169 (ALSF…ILGP), and 172–194 (LLRV…LNSL). Residues 205-259 (NPWACSCALRPLCTWLRKHPRPTSETETLLCVSPKLQTLNLLTDFPDNAFKQCTQ) form the LRRCT domain. Cystine bridges form between Cys-209-Cys-235 and Cys-211-Cys-257. A helical transmembrane segment spans residues 266–286 (LAVVYALGPASFLASLAICLA). Topologically, residues 287–334 (LGSVLTACGARRRRRRTTVRHLIRRQPDPEGPASLEDVGSPTTTAIQA) are cytoplasmic. Positions 312-334 (QPDPEGPASLEDVGSPTTTAIQA) are disordered.

Interacts with KCNMA1.

The protein localises to the cell membrane. Its subcellular location is the cytoplasm. It localises to the cytoskeleton. Auxiliary protein of the large-conductance, voltage and calcium-activated potassium channel (BK alpha). Required for the conversion of BK alpha channels from a high-voltage to a low-voltage activated channel type in non-excitable cells. These are characterized by negative membrane voltages and constant low levels of calcium. This is Leucine-rich repeat-containing protein 26 (Lrrc26) from Rattus norvegicus (Rat).